Reading from the N-terminus, the 156-residue chain is Translation initiation factor IF-1, chloroplastic (156 aa).

A chloroplast-targeting transit peptide spans 1–81 (MASLSWWNPA…RRTTSIQCLS (81 aa)). Residues 51–79 (KSLLVKTQQQSKKKKNNSTNSRRTTSIQC) form a disordered region. The span at 67–76 (NSTNSRRTTS) shows a compositional bias: low complexity. An S1-like domain is found at 82–151 (QEQKWTHEGS…SKGRIIYRLR (70 aa)).

Belongs to the IF-1 family. As to quaternary structure, component of the 30S ribosomal translation pre-initiation complex which assembles on the 30S ribosome in the order IF-2 and IF-3, IF-1 and N-formylmethionyl-tRNA(fMet); mRNA recruitment can occur at any time during PIC assembly.

It is found in the plastid. Its subcellular location is the chloroplast. In terms of biological role, one of the essential components for the initiation of protein synthesis. Stabilizes the binding of IF-2 and IF-3 on the 30S subunit to which N-formylmethionyl-tRNA(fMet) subsequently binds. Helps modulate mRNA selection, yielding the 30S pre-initiation complex (PIC). Upon addition of the 50S ribosomal subunit IF-1, IF-2 and IF-3 are released leaving the mature 70S translation initiation complex. This is Translation initiation factor IF-1, chloroplastic (infA) from Solanum lycopersicum (Tomato).